Here is a 97-residue protein sequence, read N- to C-terminus: Large ribosomal subunit protein uL23 (97 aa).

Belongs to the universal ribosomal protein uL23 family. Part of the 50S ribosomal subunit. Contacts protein L29, and trigger factor when it is bound to the ribosome.

One of the early assembly proteins it binds 23S rRNA. One of the proteins that surrounds the polypeptide exit tunnel on the outside of the ribosome. Forms the main docking site for trigger factor binding to the ribosome. This chain is Large ribosomal subunit protein uL23, found in Allorhizobium ampelinum (strain ATCC BAA-846 / DSM 112012 / S4) (Agrobacterium vitis (strain S4)).